A 603-amino-acid chain; its full sequence is NADH-ubiquinone oxidoreductase chain 5 (603 aa).

15 helical membrane passes run Ile4 to Leu24, Ile35 to Val55, Phe84 to Ser104, Leu121 to Phe141, Ile177 to Glu197, Leu213 to Leu233, Thr241 to Ile261, Val273 to Leu293, Ile301 to Asn320, Ala325 to Ile347, Met366 to Leu386, Leu413 to Gly433, Leu457 to Thr477, Met480 to Val500, and Leu583 to Leu603.

It belongs to the complex I subunit 5 family. In terms of assembly, core subunit of respiratory chain NADH dehydrogenase (Complex I) which is composed of 45 different subunits.

Its subcellular location is the mitochondrion inner membrane. It carries out the reaction a ubiquinone + NADH + 5 H(+)(in) = a ubiquinol + NAD(+) + 4 H(+)(out). Functionally, core subunit of the mitochondrial membrane respiratory chain NADH dehydrogenase (Complex I) which catalyzes electron transfer from NADH through the respiratory chain, using ubiquinone as an electron acceptor. Essential for the catalytic activity and assembly of complex I. The sequence is that of NADH-ubiquinone oxidoreductase chain 5 (MT-ND5) from Mammuthus primigenius (Siberian woolly mammoth).